A 396-amino-acid chain; its full sequence is MIKLRLTKDAKVGCCFLIFGLLNNLLYVIILSAALDLVGANVSKGVVLLSNIVPSLACKLSASILHVHKFKFAKRIGFCVFMSILGMQWIAWSSSVPSKMLGVSLAAISSSFGEISFLHLSSRYHSVSLPCWSSGTGLAGLFGASSYLVMTTWFNFSVRSTLIISSFLPLFLLIMYFFVLPESESTSPSINNNYTPIESIDLRAGHVSFNFVNSLKQTFIFMQPYLLSHMFPQFLVYFSEYTINIGVAPTLLFPPEKAGFSSFRDFYPTYQTVYQIGVFLSRSSISFFTVPYLRTLAITQFIILLFTILQSALYLTSSYHFVLFLIFVEGLIGGTVYVNVYHSLQTTESSQRELAISTVGSSDSSGIFLASLVSLFLEPSLCHFQADRGRDWCALT.

8 consecutive transmembrane segments (helical) span residues 15 to 35, 45 to 65, 76 to 96, 138 to 158, 161 to 181, 234 to 254, 296 to 316, and 321 to 341; these read CFLI…SAAL, GVVL…ASIL, IGFC…SSSV, LAGL…NFSV, TLII…FVLP, FLVY…LLFP, LAIT…LYLT, and FVLF…VNVY.

The protein belongs to the battenin family.

It is found in the endoplasmic reticulum membrane. The protein resides in the vacuole membrane. Its function is as follows. Involved in vacuolar transport and vacuole pH homeostasis. Also required for cytokinesis. In Schizosaccharomyces pombe (strain 972 / ATCC 24843) (Fission yeast), this protein is Protein btn1.